The chain runs to 819 residues: Myosin light chain kinase 3 (819 aa).

Residues 146 to 460 (VPWRRGSPGD…PGVGNPEPEQ (315 aa)) are disordered. Residue serine 152 is modified to Phosphoserine. Composition is skewed to basic and acidic residues over residues 158-170 (EENK…EGAK) and 183-196 (DARE…KADV). The span at 307-318 (GPGPQCPGPPGL) shows a compositional bias: pro residues. Residues serine 355, serine 401, and serine 408 each carry the phosphoserine modification. Residues 515-770 (VCQHEVLGGG…ATQCLKHEWL (256 aa)) form the Protein kinase domain. ATP is bound by residues 521 to 529 (LGGGRFGQV) and lysine 544. Catalysis depends on aspartate 636, which acts as the Proton acceptor.

Belongs to the protein kinase superfamily. CAMK Ser/Thr protein kinase family. Mg(2+) is required as a cofactor. In terms of processing, phosphorylated on serine residues.

It is found in the cytoplasm. It carries out the reaction L-seryl-[myosin light chain] + ATP = O-phospho-L-seryl-[myosin light chain] + ADP + H(+). The enzyme catalyses L-threonyl-[myosin light chain] + ATP = O-phospho-L-threonyl-[myosin light chain] + ADP + H(+). Functionally, kinase that phosphorylates MYL2 in vitro. Promotes sarcomere formation in cardiomyocytes and increases cardiomyocyte contractility. The chain is Myosin light chain kinase 3 (MYLK3) from Pongo abelii (Sumatran orangutan).